A 275-amino-acid chain; its full sequence is Exosome complex component Rrp42 (275 aa).

The protein belongs to the RNase PH family. Rrp42 subfamily. In terms of assembly, component of the archaeal exosome complex. Forms a hexameric ring-like arrangement composed of 3 Rrp41-Rrp42 heterodimers. The hexameric ring associates with a trimer of Rrp4 and/or Csl4 subunits.

Its subcellular location is the cytoplasm. In terms of biological role, non-catalytic component of the exosome, which is a complex involved in RNA degradation. Contributes to the structuring of the Rrp41 active site. This chain is Exosome complex component Rrp42, found in Saccharolobus solfataricus (strain ATCC 35092 / DSM 1617 / JCM 11322 / P2) (Sulfolobus solfataricus).